The following is a 482-amino-acid chain: tRNA sulfurtransferase (482 aa).

Positions L61 to R165 constitute a THUMP domain. ATP contacts are provided by residues L183–I184, K265, G287, and Q296. A disulfide bridge connects residues C344 and C456. Residues F404–P482 form the Rhodanese domain. The active-site Cysteine persulfide intermediate is the C456.

The protein belongs to the ThiI family.

It localises to the cytoplasm. The catalysed reaction is [ThiI sulfur-carrier protein]-S-sulfanyl-L-cysteine + a uridine in tRNA + 2 reduced [2Fe-2S]-[ferredoxin] + ATP + H(+) = [ThiI sulfur-carrier protein]-L-cysteine + a 4-thiouridine in tRNA + 2 oxidized [2Fe-2S]-[ferredoxin] + AMP + diphosphate. It carries out the reaction [ThiS sulfur-carrier protein]-C-terminal Gly-Gly-AMP + S-sulfanyl-L-cysteinyl-[cysteine desulfurase] + AH2 = [ThiS sulfur-carrier protein]-C-terminal-Gly-aminoethanethioate + L-cysteinyl-[cysteine desulfurase] + A + AMP + 2 H(+). Its pathway is cofactor biosynthesis; thiamine diphosphate biosynthesis. In terms of biological role, catalyzes the ATP-dependent transfer of a sulfur to tRNA to produce 4-thiouridine in position 8 of tRNAs, which functions as a near-UV photosensor. Also catalyzes the transfer of sulfur to the sulfur carrier protein ThiS, forming ThiS-thiocarboxylate. This is a step in the synthesis of thiazole, in the thiamine biosynthesis pathway. The sulfur is donated as persulfide by IscS. The sequence is that of tRNA sulfurtransferase from Escherichia coli O9:H4 (strain HS).